The chain runs to 470 residues: ATP synthase subunit beta (470 aa).

An ATP-binding site is contributed by 148–155 (GGAGVGKT).

The protein belongs to the ATPase alpha/beta chains family. F-type ATPases have 2 components, CF(1) - the catalytic core - and CF(0) - the membrane proton channel. CF(1) has five subunits: alpha(3), beta(3), gamma(1), delta(1), epsilon(1). CF(0) has three main subunits: a(1), b(2) and c(9-12). The alpha and beta chains form an alternating ring which encloses part of the gamma chain. CF(1) is attached to CF(0) by a central stalk formed by the gamma and epsilon chains, while a peripheral stalk is formed by the delta and b chains.

Its subcellular location is the cell inner membrane. The catalysed reaction is ATP + H2O + 4 H(+)(in) = ADP + phosphate + 5 H(+)(out). In terms of biological role, produces ATP from ADP in the presence of a proton gradient across the membrane. The catalytic sites are hosted primarily by the beta subunits. This is ATP synthase subunit beta from Saccharophagus degradans (strain 2-40 / ATCC 43961 / DSM 17024).